The primary structure comprises 376 residues: Protein-glutamate methylesterase/protein-glutamine glutaminase (376 aa).

A Response regulatory domain is found at 5–122 (KVLIVDDSAL…QHTFEDYTDE (118 aa)). A 4-aspartylphosphate modification is found at Asp-56. Positions 185–376 (SKPSHKVIAL…PEKILALIKK (192 aa)) constitute a CheB-type methylesterase domain. Residues Ser-197, His-223, and Asp-319 contribute to the active site.

It belongs to the CheB family. Phosphorylated by CheA. Phosphorylation of the N-terminal regulatory domain activates the methylesterase activity.

It is found in the cytoplasm. It carries out the reaction [protein]-L-glutamate 5-O-methyl ester + H2O = L-glutamyl-[protein] + methanol + H(+). The enzyme catalyses L-glutaminyl-[protein] + H2O = L-glutamyl-[protein] + NH4(+). Functionally, involved in chemotaxis. Part of a chemotaxis signal transduction system that modulates chemotaxis in response to various stimuli. Catalyzes the demethylation of specific methylglutamate residues introduced into the chemoreceptors (methyl-accepting chemotaxis proteins or MCP) by CheR. Also mediates the irreversible deamidation of specific glutamine residues to glutamic acid. This Hydrogenovibrio crunogenus (strain DSM 25203 / XCL-2) (Thiomicrospira crunogena) protein is Protein-glutamate methylesterase/protein-glutamine glutaminase.